A 214-amino-acid polypeptide reads, in one-letter code: MINFQKARDRMVETQLVSRGIHDRRVLEAMRKVPRHLFVDEALKEQAHSDHPLPIGDKQTISQPYIVALMTQSLELQGHEKILEIGTGSGYQAAVLAELAERVFSIERNPNLAYRANQTLQKLGYKNIIVRVADGTLGWPDEAPFDAILVTAGTPKIPQPLLDQLAEGGRLVVPVGDRLAQELVLVESGPEGMKHTNLGGVRFVDLVGKWGWEG.

S62 is a catalytic residue.

It belongs to the methyltransferase superfamily. L-isoaspartyl/D-aspartyl protein methyltransferase family.

The protein localises to the cytoplasm. The enzyme catalyses [protein]-L-isoaspartate + S-adenosyl-L-methionine = [protein]-L-isoaspartate alpha-methyl ester + S-adenosyl-L-homocysteine. Its function is as follows. Catalyzes the methyl esterification of L-isoaspartyl residues in peptides and proteins that result from spontaneous decomposition of normal L-aspartyl and L-asparaginyl residues. It plays a role in the repair and/or degradation of damaged proteins. The polypeptide is Protein-L-isoaspartate O-methyltransferase 1 (Syntrophobacter fumaroxidans (strain DSM 10017 / MPOB)).